Here is a 180-residue protein sequence, read N- to C-terminus: Large ribosomal subunit protein uL5 (180 aa).

This sequence belongs to the universal ribosomal protein uL5 family. Part of the 50S ribosomal subunit; part of the 5S rRNA/L5/L18/L25 subcomplex. Contacts the 5S rRNA and the P site tRNA. Forms a bridge to the 30S subunit in the 70S ribosome.

Functionally, this is one of the proteins that bind and probably mediate the attachment of the 5S RNA into the large ribosomal subunit, where it forms part of the central protuberance. In the 70S ribosome it contacts protein S13 of the 30S subunit (bridge B1b), connecting the 2 subunits; this bridge is implicated in subunit movement. Contacts the P site tRNA; the 5S rRNA and some of its associated proteins might help stabilize positioning of ribosome-bound tRNAs. The sequence is that of Large ribosomal subunit protein uL5 from Mycoplasma mycoides subsp. mycoides SC (strain CCUG 32753 / NCTC 10114 / PG1).